We begin with the raw amino-acid sequence, 148 residues long: 3-dehydroquinate dehydratase (148 aa).

The Proton acceptor role is filled by tyrosine 23. Residues asparagine 75, histidine 81, and aspartate 88 each contribute to the substrate site. Histidine 101 functions as the Proton donor in the catalytic mechanism. Residues 102–103 and arginine 112 contribute to the substrate site; that span reads IS.

This sequence belongs to the type-II 3-dehydroquinase family. Homododecamer.

It carries out the reaction 3-dehydroquinate = 3-dehydroshikimate + H2O. It participates in metabolic intermediate biosynthesis; chorismate biosynthesis; chorismate from D-erythrose 4-phosphate and phosphoenolpyruvate: step 3/7. Its function is as follows. Catalyzes a trans-dehydration via an enolate intermediate. In Methylococcus capsulatus (strain ATCC 33009 / NCIMB 11132 / Bath), this protein is 3-dehydroquinate dehydratase.